We begin with the raw amino-acid sequence, 478 residues long: Glycogen synthase (478 aa).

ADP-alpha-D-glucose is bound at residue Lys-15.

This sequence belongs to the glycosyltransferase 1 family. Bacterial/plant glycogen synthase subfamily.

It catalyses the reaction [(1-&gt;4)-alpha-D-glucosyl](n) + ADP-alpha-D-glucose = [(1-&gt;4)-alpha-D-glucosyl](n+1) + ADP + H(+). Its pathway is glycan biosynthesis; glycogen biosynthesis. Functionally, synthesizes alpha-1,4-glucan chains using ADP-glucose. The sequence is that of Glycogen synthase from Clostridium botulinum (strain Alaska E43 / Type E3).